The sequence spans 280 residues: Bifunctional protein FolD (280 aa).

Residues 166–168 (GRS) and serine 191 each bind NADP(+).

The protein belongs to the tetrahydrofolate dehydrogenase/cyclohydrolase family. As to quaternary structure, homodimer.

It carries out the reaction (6R)-5,10-methylene-5,6,7,8-tetrahydrofolate + NADP(+) = (6R)-5,10-methenyltetrahydrofolate + NADPH. The enzyme catalyses (6R)-5,10-methenyltetrahydrofolate + H2O = (6R)-10-formyltetrahydrofolate + H(+). Its pathway is one-carbon metabolism; tetrahydrofolate interconversion. Functionally, catalyzes the oxidation of 5,10-methylenetetrahydrofolate to 5,10-methenyltetrahydrofolate and then the hydrolysis of 5,10-methenyltetrahydrofolate to 10-formyltetrahydrofolate. This is Bifunctional protein FolD from Teredinibacter turnerae (strain ATCC 39867 / T7901).